Here is a 158-residue protein sequence, read N- to C-terminus: Transcription elongation factor GreA (158 aa).

Residues 10-75 (TKEGKEKLEQ…QMLENMIRNA (66 aa)) adopt a coiled-coil conformation.

This sequence belongs to the GreA/GreB family.

Its function is as follows. Necessary for efficient RNA polymerase transcription elongation past template-encoded arresting sites. The arresting sites in DNA have the property of trapping a certain fraction of elongating RNA polymerases that pass through, resulting in locked ternary complexes. Cleavage of the nascent transcript by cleavage factors such as GreA or GreB allows the resumption of elongation from the new 3'terminus. GreA releases sequences of 2 to 3 nucleotides. This is Transcription elongation factor GreA from Geobacillus kaustophilus (strain HTA426).